We begin with the raw amino-acid sequence, 391 residues long: Carbamoyl phosphate synthase small chain (391 aa).

The segment at 1–189 (MIKSALLVLE…DLPAAKQPED (189 aa)) is CPSase. L-glutamine is bound by residues Ser-47, Gly-241, and Gly-243. The region spanning 193 to 380 (HVVAYDYGVK…IELIEAYRAS (188 aa)) is the Glutamine amidotransferase type-1 domain. The Nucleophile role is filled by Cys-269. The L-glutamine site is built by Leu-270, Gln-273, Asn-311, Gly-313, and Phe-314. Catalysis depends on residues His-353 and Glu-355.

This sequence belongs to the CarA family. In terms of assembly, composed of two chains; the small (or glutamine) chain promotes the hydrolysis of glutamine to ammonia, which is used by the large (or ammonia) chain to synthesize carbamoyl phosphate. Tetramer of heterodimers (alpha,beta)4.

It catalyses the reaction hydrogencarbonate + L-glutamine + 2 ATP + H2O = carbamoyl phosphate + L-glutamate + 2 ADP + phosphate + 2 H(+). It carries out the reaction L-glutamine + H2O = L-glutamate + NH4(+). The protein operates within amino-acid biosynthesis; L-arginine biosynthesis; carbamoyl phosphate from bicarbonate: step 1/1. Its pathway is pyrimidine metabolism; UMP biosynthesis via de novo pathway; (S)-dihydroorotate from bicarbonate: step 1/3. Functionally, small subunit of the glutamine-dependent carbamoyl phosphate synthetase (CPSase). CPSase catalyzes the formation of carbamoyl phosphate from the ammonia moiety of glutamine, carbonate, and phosphate donated by ATP, constituting the first step of 2 biosynthetic pathways, one leading to arginine and/or urea and the other to pyrimidine nucleotides. The small subunit (glutamine amidotransferase) binds and cleaves glutamine to supply the large subunit with the substrate ammonia. The polypeptide is Carbamoyl phosphate synthase small chain (Yersinia pestis).